We begin with the raw amino-acid sequence, 352 residues long: Small ribosomal subunit biogenesis GTPase RsgA (352 aa).

A compositionally biased stretch (basic residues) spans 1–21 (MKKNKLSKNQHRRIQAHHQYR). Residues 1–38 (MKKNKLSKNQHRRIQAHHQYRLHPTSLTDDKNNQLDDA) are disordered. Residues 116–278 (FYDGIKPMAA…LIDSPGIREF (163 aa)) form the CP-type G domain. GTP contacts are provided by residues 164–167 (NKID) and 218–226 (GQSGVGKSS). The Zn(2+) site is built by Cys-302, Cys-307, His-309, and Cys-315.

Belongs to the TRAFAC class YlqF/YawG GTPase family. RsgA subfamily. Monomer. Associates with 30S ribosomal subunit, binds 16S rRNA. It depends on Zn(2+) as a cofactor.

It localises to the cytoplasm. Its function is as follows. One of several proteins that assist in the late maturation steps of the functional core of the 30S ribosomal subunit. Helps release RbfA from mature subunits. May play a role in the assembly of ribosomal proteins into the subunit. Circularly permuted GTPase that catalyzes slow GTP hydrolysis, GTPase activity is stimulated by the 30S ribosomal subunit. The polypeptide is Small ribosomal subunit biogenesis GTPase RsgA (Hamiltonella defensa subsp. Acyrthosiphon pisum (strain 5AT)).